A 124-amino-acid polypeptide reads, in one-letter code: Ribonuclease P protein component 2 (124 aa).

The protein belongs to the eukaryotic/archaeal RNase P protein component 2 family. In terms of assembly, consists of a catalytic RNA component and at least 4-5 protein subunits.

It is found in the cytoplasm. It catalyses the reaction Endonucleolytic cleavage of RNA, removing 5'-extranucleotides from tRNA precursor.. In terms of biological role, part of ribonuclease P, a protein complex that generates mature tRNA molecules by cleaving their 5'-ends. The polypeptide is Ribonuclease P protein component 2 (Methanothermobacter thermautotrophicus (strain ATCC 29096 / DSM 1053 / JCM 10044 / NBRC 100330 / Delta H) (Methanobacterium thermoautotrophicum)).